The following is a 143-amino-acid chain: MATAAAGSSLICIKSASCSLNRAQVPSGLSSLRSVSLPISGKIFPSLRSSRGPLSFRVCCQAKQETVTRVCEIVKKQLALPEDSEVNGLSKFSALGADSLDTVEIVMGLEEEFGISVEEESAQSIQTVQDAADLIEKLVGNKK.

Residues 1 to 60 (MATAAAGSSLICIKSASCSLNRAQVPSGLSSLRSVSLPISGKIFPSLRSSRGPLSFRVCC) constitute a chloroplast transit peptide. The Carrier domain occupies 64-139 (QETVTRVCEI…DAADLIEKLV (76 aa)). Position 99 is an O-(pantetheine 4'-phosphoryl)serine (Ser99).

The protein belongs to the acyl carrier protein (ACP) family. In terms of processing, 4'-phosphopantetheine is transferred from CoA to a specific serine of apo-ACP by acpS. This modification is essential for activity because fatty acids are bound in thioester linkage to the sulfhydryl of the prosthetic group.

The protein localises to the plastid. Its subcellular location is the chloroplast. Its pathway is lipid metabolism; fatty acid biosynthesis. Functionally, carrier of the growing fatty acid chain in fatty acid biosynthesis. In Cuphea lanceolata (Cigar flower), this protein is Acyl carrier protein 3, chloroplastic (ACL1.3).